The following is a 985-amino-acid chain: MAASVAAAARRLRRAIRRSPAWRGLSHRPLSSEPPAAKASAVRAAFLNFFRDRHGHRLVPSASVRPRGDPSLLFVNAGMNQFKPIFLGTVDPRSEMAGFRRVANSQKCVRAGGHHNDLEDVGRDLSHHTFFEMLGNWAFGGEYFKEEACNMAWELLTQVYGIPEERLWISYFDGDPKAGLDPDLETRDIWLSLGVPASRVLSFGPQENFWEMGDTGPCGPCTEIHYDLAGGVGAPQLVELWNLVFMQHNREADGSLQPLPQRHVDTGMGLERLVAVLQGKHSTYDTDLFSPLLNAIQQGCRAPPYLGRVGVADEGRTDTAYRVVADHIRTLSVCISDGIFPGMSGPPLVLRRILRRAVRFSMEILKAPPGFLGSLVPVVVETLGDAYPELQRNSAQIANLVSEDEAAFLASLERGRRIIDRTLRTLGPSDMFPAEVAWSLSLCGDLGLPLDMVELMLEEKGVQLDSAGLERLAQEEAQHRARQAEPVQKQGLWLDVHALGELQRQGVPPTDDSPKYNYSLRPSGSYEFGTCEAQVLQLYTEDGTAVASVGKGQRCGLLLDRTNFYAEQGGQASDRGYLVRAGQEDVLFPVARAQVCGGFILHEAVAPECLRLGDQVQLHVDEAWRLGCMAKHTATHLLNWALRQTLGPGTEQQGSHLNPEQLRLDVTTQTPLTPEQLRAVENTVQEAVGQDEAVYMEEVPLALTAQVPGLRSLDEVYPDPVRVVSVGVPVAHALDPASQAALQTSVELCCGTHLLRTGAVGDLVIIGDRQLSKGTTRLLAVTGEQAQQARELGQSLAQEVKAATERLSLGSRDVAEALRLSKDIGRLIEAVETAVMPQWQRRELLATVKMLQRRANTAIRKLQMGQAAKKTQELLERHSKGPLIVDTVSAESLSVLVKVVRQLCEQAPSTSVLLLSPQPMGKVLCACQVAQGAMPTFTAEAWALAVCSHMGGKAWGSRVVAQGTGSTTDLEAALSIAQTYALSQL.

Residues 1 to 23 (MAASVAAAARRLRRAIRRSPAWR) constitute a mitochondrion transit peptide. ATP-binding positions include arginine 110, histidine 128, tryptophan 210, and 240 to 242 (LWN). L-alanine contacts are provided by asparagine 242 and aspartate 265. Residue glycine 269 participates in ATP binding. Positions 632, 636, 749, and 753 each coordinate Zn(2+).

This sequence belongs to the class-II aminoacyl-tRNA synthetase family. As to quaternary structure, monomer. Zn(2+) is required as a cofactor.

The protein resides in the mitochondrion. The enzyme catalyses tRNA(Ala) + L-alanine + ATP = L-alanyl-tRNA(Ala) + AMP + diphosphate. It carries out the reaction (S)-lactate + ATP + H(+) = (S)-lactoyl-AMP + diphosphate. It catalyses the reaction (S)-lactoyl-AMP + L-lysyl-[protein] = N(6)-[(S)-lactoyl]-L-lysyl-[protein] + AMP + 2 H(+). Its function is as follows. Catalyzes the attachment of alanine to tRNA(Ala) in a two-step reaction: alanine is first activated by ATP to form Ala-AMP and then transferred to the acceptor end of tRNA(Ala). Also edits incorrectly charged tRNA(Ala) via its editing domain. In presence of high levels of lactate, also acts as a protein lactyltransferase that mediates lactylation of lysine residues in target proteins, such as CGAS. Acts as an inhibitor of cGAS/STING signaling by catalyzing lactylation of CGAS, preventing the formation of liquid-like droplets in which CGAS is activated. The polypeptide is Alanine--tRNA ligase, mitochondrial (Homo sapiens (Human)).